A 450-amino-acid chain; its full sequence is MKRKKHVLHQILSEKRKAERIRGGNMSAKDEFGTTKYIIYAEFEANGVVERPDVVGAIFGQTEGLLGDDLDLRELQKTGRIGRIRVEVHTKAGKTYGTITVPSSLDRVETAILAAALETIDRVGPAEAHIKVLRIEDVRATKRKYIIERAKEILETLMEEEIPETQELTEEVKKAVRAKELIEYGPEKLPAGPHVPFSDSIIVVEGRADVLNLLKHGIKNAIAVEGTSIPETIIKLSKERIVTAFTDGDRGGELILKELLQVADVDYVARAPEGKEVEELTKKEIVKALRSKIPAEQVITEMFHKGKNFYEILKEKERTAPSKEVKPAPKHEPKPQPVEQKPREEKIIRPIQQAKSPEIEKFEKFIERVKKEQTAILLDENMNVIAEIPVRDLLTTISTRDNIYAIVFNGIITQRLIDIVSENNVRYLVGARKANVVRRPVNLKILTFAE.

The 75-residue stretch at 199-273 (DSIIVVEGRA…DVDYVARAPE (75 aa)) folds into the Toprim domain. The Mg(2+) site is built by Glu205, Asp247, and Asp249. Residues 320 to 348 (APSKEVKPAPKHEPKPQPVEQKPREEKII) are compositionally biased toward basic and acidic residues. The interval 320 to 350 (APSKEVKPAPKHEPKPQPVEQKPREEKIIRP) is disordered.

It belongs to the archaeal DnaG primase family. As to quaternary structure, forms a ternary complex with MCM helicase and DNA. Component of the archaeal exosome complex. It depends on Mg(2+) as a cofactor.

It catalyses the reaction ssDNA + n NTP = ssDNA/pppN(pN)n-1 hybrid + (n-1) diphosphate.. In terms of biological role, RNA polymerase that catalyzes the synthesis of short RNA molecules used as primers for DNA polymerase during DNA replication. Also part of the exosome, which is a complex involved in RNA degradation. Acts as a poly(A)-binding protein that enhances the interaction between heteromeric, adenine-rich transcripts and the exosome. The sequence is that of DNA primase DnaG from Thermococcus gammatolerans (strain DSM 15229 / JCM 11827 / EJ3).